The following is a 130-amino-acid chain: Small ribosomal subunit protein uS9 (130 aa).

Belongs to the universal ribosomal protein uS9 family.

The polypeptide is Small ribosomal subunit protein uS9 (Lawsonia intracellularis (strain PHE/MN1-00)).